Consider the following 1044-residue polypeptide: Phosphatidylinositol 4,5-bisphosphate 3-kinase catalytic subunit delta isoform (1044 aa).

One can recognise a PI3K-ABD domain in the interval 16 to 105 (ENQSVVVDFL…LPVLRLVARE (90 aa)). A PI3K-RBD domain is found at 187 to 278 (NRALLVNVKF…GLTPHLTMVH (92 aa)). The interval 287-312 (DEQSNPAPQVQKPRAKPPPIPAKKPS) is disordered. Residues 319–476 (LEQPFRIELI…SAAALLICLP (158 aa)) form the C2 PI3K-type domain. Residues 497–674 (HSECVHVTEE…GLILEAYCRG (178 aa)) enclose the PIK helical domain. Tyr-524 carries the phosphotyrosine modification. The 283-residue stretch at 745–1027 (CVEQCTFMDS…KFNEALRESW (283 aa)) folds into the PI3K/PI4K catalytic domain. Residues 751–757 (FMDSKMK) form a G-loop region. The tract at residues 890-898 (GIGDRHSDN) is catalytic loop. Residues 909–935 (HIDFGHFLGNFKTKFGINRERVPFILT) are activation loop. Ser-1039 bears the Phosphoserine; by autocatalysis mark.

The protein belongs to the PI3/PI4-kinase family. As to quaternary structure, heterodimer of a catalytic subunit PIK3CD and a p85 regulatory subunit (PIK3R1, PIK3R2 or PIK3R3). Interacts with ERAS. Interacts with HRAS. Post-translationally, autophosphorylation on Ser-1039 results in the almost complete inactivation of the lipid kinase activity. In humans, the highest levels of expression are seen in peripheral blood mononuclear cells, spleen, and thymus, and low levels of expression in testes, uterus, colon, and small intestine but not in other tissues examined including prostate, heart, brain, and liver. Isoform 2 is expressed in normal thymus, lung and spleen tissues, and is detected at low levels in normal lysates from colon and ovarian biopsies, at elevated levels in lysates from colorectal tumors and is abundantly expressed in some ovarian tumors (at protein level). Both isoform 1 and isoform 2 are widely expressed. Isoform 1 is expressed predominantly in leukocytes.

It localises to the cytoplasm. The enzyme catalyses a 1,2-diacyl-sn-glycero-3-phospho-(1D-myo-inositol-4,5-bisphosphate) + ATP = a 1,2-diacyl-sn-glycero-3-phospho-(1D-myo-inositol-3,4,5-trisphosphate) + ADP + H(+). It carries out the reaction a 1,2-diacyl-sn-glycero-3-phospho-(1D-myo-inositol) + ATP = a 1,2-diacyl-sn-glycero-3-phospho-(1D-myo-inositol-3-phosphate) + ADP + H(+). The catalysed reaction is 1-octadecanoyl-2-(5Z,8Z,11Z,14Z)-eicosatetraenoyl-sn-glycero-3-phospho-1D-myo-inositol 4,5-bisphosphate + ATP = 1-octadecanoyl-2-(5Z,8Z,11Z,14Z-eicosatetraenoyl)-sn-glycero-3-phospho-(1D-myo-inositol 3,4,5-triphosphate) + ADP + H(+). Its pathway is phospholipid metabolism; phosphatidylinositol phosphate biosynthesis. Its activity is regulated as follows. Activated by growth factors and cytokine receptors through a tyrosine-kinase-dependent mechanism. Activated by RAS. IC87114 inhibits lipid kinase activity and is selective in cells at doses up to 5-10 uM. IC87114 blocks T-cell receptor signaling in naive and memory T-cells and reduces cytokine production by memory T-cells. In terms of biological role, phosphoinositide-3-kinase (PI3K) phosphorylates phosphatidylinositol (PI) and its phosphorylated derivatives at position 3 of the inositol ring to produce 3-phosphoinositides. Uses ATP and PtdIns(4,5)P2 (phosphatidylinositol 4,5-bisphosphate) to generate phosphatidylinositol 3,4,5-trisphosphate (PIP3). PIP3 plays a key role by recruiting PH domain-containing proteins to the membrane, including AKT1 and PDPK1, activating signaling cascades involved in cell growth, survival, proliferation, motility and morphology. Mediates immune responses. Plays a role in B-cell development, proliferation, migration, and function. Required for B-cell receptor (BCR) signaling. Mediates B-cell proliferation response to anti-IgM, anti-CD40 and IL4 stimulation. Promotes cytokine production in response to TLR4 and TLR9. Required for antibody class switch mediated by TLR9. Involved in the antigen presentation function of B-cells. Involved in B-cell chemotaxis in response to CXCL13 and sphingosine 1-phosphate (S1P). Required for proliferation, signaling and cytokine production of naive, effector and memory T-cells. Required for T-cell receptor (TCR) signaling. Mediates TCR signaling events at the immune synapse. Activation by TCR leads to antigen-dependent memory T-cell migration and retention to antigenic tissues. Together with PIK3CG participates in T-cell development. Contributes to T-helper cell expansion and differentiation. Required for T-cell migration mediated by homing receptors SELL/CD62L, CCR7 and S1PR1 and antigen dependent recruitment of T-cells. Together with PIK3CG is involved in natural killer (NK) cell development and migration towards the sites of inflammation. Participates in NK cell receptor activation. Plays a role in NK cell maturation and cytokine production. Together with PIK3CG is involved in neutrophil chemotaxis and extravasation. Together with PIK3CG participates in neutrophil respiratory burst. Plays important roles in mast-cell development and mast cell mediated allergic response. Involved in stem cell factor (SCF)-mediated proliferation, adhesion and migration. Required for allergen-IgE-induced degranulation and cytokine release. The lipid kinase activity is required for its biological function. Isoform 2 may be involved in stabilizing total RAS levels, resulting in increased ERK phosphorylation and increased PI3K activity. This chain is Phosphatidylinositol 4,5-bisphosphate 3-kinase catalytic subunit delta isoform (PIK3CD), found in Homo sapiens (Human).